The sequence spans 372 residues: 3-ketodihydrosphingosine reductase TSC10 (372 aa).

Val-64 contributes to the NADP(+) binding site. Residues Gly-67, Ser-69, Gly-71, Arg-92, Lys-96, Asp-123, and Leu-124 each coordinate NADPH. The GXSXG signature appears at 67–71 (GGSQG). Asp-123 contributes to the NADP(+) binding site. Ser-205 acts as the Proton donor in catalysis. 3 residues coordinate NADP(+): Tyr-219, Lys-223, and Ser-254. Tyr-219 functions as the Proton acceptor in the catalytic mechanism. Lys-223 serves as the catalytic Lowers pKa of active site Tyr. The helical transmembrane segment at 321-341 (LLQIPLAIFMCIFSPVWNAFV) threads the bilayer.

Belongs to the short-chain dehydrogenases/reductases (SDR) family.

The protein resides in the endoplasmic reticulum membrane. The enzyme catalyses sphinganine + NADP(+) = 3-oxosphinganine + NADPH + H(+). It functions in the pathway lipid metabolism; sphingolipid metabolism. Catalyzes the reduction of 3'-oxosphinganine (3-ketodihydrosphingosine/KDS) to sphinganine (dihydrosphingosine/DHS), the second step of de novo sphingolipid biosynthesis. This Yarrowia lipolytica (strain CLIB 122 / E 150) (Yeast) protein is 3-ketodihydrosphingosine reductase TSC10 (TSC10).